A 191-amino-acid polypeptide reads, in one-letter code: Prophage tail fiber assembly protein homolog TfaR (191 aa).

This sequence belongs to the tfa family.

The polypeptide is Prophage tail fiber assembly protein homolog TfaR (tfaR) (Escherichia coli (strain K12)).